Reading from the N-terminus, the 260-residue chain is Pyridoxine 5'-phosphate synthase (260 aa).

Asn-15 is a 3-amino-2-oxopropyl phosphate binding site. 17–18 provides a ligand contact to 1-deoxy-D-xylulose 5-phosphate; it reads DH. Arg-26 provides a ligand contact to 3-amino-2-oxopropyl phosphate. The Proton acceptor role is filled by His-51. The 1-deoxy-D-xylulose 5-phosphate site is built by Arg-53 and His-58. The Proton acceptor role is filled by Glu-78. Residue Thr-108 participates in 1-deoxy-D-xylulose 5-phosphate binding. Catalysis depends on His-199, which acts as the Proton donor. 3-amino-2-oxopropyl phosphate is bound by residues Gly-200 and 221 to 222; that span reads GH.

It belongs to the PNP synthase family. Homooctamer; tetramer of dimers.

The protein localises to the cytoplasm. It catalyses the reaction 3-amino-2-oxopropyl phosphate + 1-deoxy-D-xylulose 5-phosphate = pyridoxine 5'-phosphate + phosphate + 2 H2O + H(+). The protein operates within cofactor biosynthesis; pyridoxine 5'-phosphate biosynthesis; pyridoxine 5'-phosphate from D-erythrose 4-phosphate: step 5/5. In terms of biological role, catalyzes the complicated ring closure reaction between the two acyclic compounds 1-deoxy-D-xylulose-5-phosphate (DXP) and 3-amino-2-oxopropyl phosphate (1-amino-acetone-3-phosphate or AAP) to form pyridoxine 5'-phosphate (PNP) and inorganic phosphate. This chain is Pyridoxine 5'-phosphate synthase, found in Cupriavidus necator (strain ATCC 17699 / DSM 428 / KCTC 22496 / NCIMB 10442 / H16 / Stanier 337) (Ralstonia eutropha).